Here is a 266-residue protein sequence, read N- to C-terminus: uncharacterized protein (266 aa).

This sequence belongs to the ascovirus HvAV ORF59 family.

This is an uncharacterized protein from Trichoplusia ni ascovirus 2c (TnAV-2c).